Consider the following 84-residue polypeptide: U21-theraphotoxin-Cg1a 2 (84 aa).

Residues 1–21 (MKVSVLITLAVLGVMFLFTSA) form the signal peptide. Residues 22–47 (EERGSDQMDSPAWLKSMEIIFQSEER) constitute a propeptide that is removed on maturation. 3 disulfide bridges follow: cysteine 49/cysteine 63, cysteine 56/cysteine 68, and cysteine 62/cysteine 76. At valine 82 the chain carries Valine amide.

The protein belongs to the neurotoxin 10 (Hwtx-1) family. 05 (F4a) subfamily. In terms of tissue distribution, expressed by the venom gland.

It is found in the secreted. Functionally, probable ion channel inhibitor. The polypeptide is U21-theraphotoxin-Cg1a 2 (Chilobrachys guangxiensis (Chinese earth tiger tarantula)).